A 243-amino-acid polypeptide reads, in one-letter code: MSDFLLNPFSEIAEVSVGQHFYWQLGSYEVHGQVLLVSWFVLAVIFGLSFVGNSNLKSTPDGLQNFTEFVTEFIRDLAKTQIGEEEYLKWVPYLGTVFLFIFVSNWSGALLPWALIELPNGELAAPTNDINTTVALALLTSISYFYAGIRKKGLRYFNRYVQPAAFLLPINVLEDFTKPLSLSFRLFGNILADELVVGVLVSLVPLIIPIPIMLLGCFTSAIQALVFATLAGAYIGEAVEDHH.

5 helical membrane-spanning segments follow: residues 32–52, 96–116, 129–149, 195–215, and 216–236; these read GQVL…SFVG, TVFL…WALI, DINT…YAGI, LVVG…IMLL, and GCFT…AYIG.

This sequence belongs to the ATPase A chain family. F-type ATPases have 2 components, CF(1) - the catalytic core - and CF(0) - the membrane proton channel. CF(1) has five subunits: alpha(3), beta(3), gamma(1), delta(1), epsilon(1). CF(0) has four main subunits: a, b, b' and c.

It is found in the plastid. Its subcellular location is the chloroplast thylakoid membrane. Its function is as follows. Key component of the proton channel; it plays a direct role in the translocation of protons across the membrane. The chain is ATP synthase subunit a, chloroplastic from Tetradesmus obliquus (Green alga).